The primary structure comprises 598 residues: Aspartate--tRNA ligase (598 aa).

Residue E182 coordinates L-aspartate. Positions 206–209 are aspartate; that stretch reads QLFK. R228 is a binding site for L-aspartate. Residues 228-230 and Q237 contribute to the ATP site; that span reads RDE. Position 456 (H456) interacts with L-aspartate. E490 contributes to the ATP binding site. R497 is an L-aspartate binding site. 542–545 provides a ligand contact to ATP; the sequence is GVDR.

This sequence belongs to the class-II aminoacyl-tRNA synthetase family. Type 1 subfamily. Homodimer.

Its subcellular location is the cytoplasm. The catalysed reaction is tRNA(Asp) + L-aspartate + ATP = L-aspartyl-tRNA(Asp) + AMP + diphosphate. Catalyzes the attachment of L-aspartate to tRNA(Asp) in a two-step reaction: L-aspartate is first activated by ATP to form Asp-AMP and then transferred to the acceptor end of tRNA(Asp). The sequence is that of Aspartate--tRNA ligase from Agathobacter rectalis (strain ATCC 33656 / DSM 3377 / JCM 17463 / KCTC 5835 / VPI 0990) (Eubacterium rectale).